Here is a 517-residue protein sequence, read N- to C-terminus: Methylmalonyl-CoA decarboxylase subunit alpha (517 aa).

In terms of domain architecture, CoA carboxyltransferase N-terminal spans 4-260; the sequence is AAKKIQDLQK…NNMEKAPEFG (257 aa). The 243-residue stretch at 271–513 folds into the CoA carboxyltransferase C-terminal domain; the sequence is ELDALMPDNP…REKLPAKKHG (243 aa).

This sequence belongs to the AccD/PCCB family. As to quaternary structure, the methylmalonyl-CoA decarboxylase is composed of four subunits: the carboxyltransferase alpha subunit (MmdA), the tunnel beta subunit (MmdB), the biotin-containing gamma subunit (MmdC) and the delta subunit (MmdD).

Its subcellular location is the cell membrane. The catalysed reaction is (S)-methylmalonyl-CoA + Na(+)(in) + H(+)(out) = propanoyl-CoA + Na(+)(out) + CO2. In terms of biological role, carboxyltransferase subunit of the sodium ion pump methylmalonyl-CoA decarboxylase, which converts the chemical energy of a decarboxylation reaction into an electrochemical gradient of Na(+) ions across the cytoplasmic membrane, thereby creating a sodium ion motive force that is used for ATP synthesis. The alpha subunit catalyzes the Na(+)-independent carboxyltransfer from methylmalonyl-CoA to the prosthetic biotin group located on the gamma subunit. The polypeptide is Methylmalonyl-CoA decarboxylase subunit alpha (Propionigenium modestum).